Reading from the N-terminus, the 129-residue chain is Large ribosomal subunit protein bL20 (129 aa).

This sequence belongs to the bacterial ribosomal protein bL20 family.

Its function is as follows. Binds directly to 23S ribosomal RNA and is necessary for the in vitro assembly process of the 50S ribosomal subunit. It is not involved in the protein synthesizing functions of that subunit. The polypeptide is Large ribosomal subunit protein bL20 (Mycobacterium sp. (strain JLS)).